The following is a 184-amino-acid chain: Lipocalin-15 (184 aa).

Positions 1 to 20 are cleaved as a signal peptide; it reads MMSFLLGAILTLLWAPTAQA. Cys-83 and Cys-176 form a disulfide bridge.

The protein belongs to the calycin superfamily. Lipocalin family.

It is found in the secreted. This is Lipocalin-15 (LCN15) from Homo sapiens (Human).